Consider the following 239-residue polypeptide: 7-cyano-7-deazaguanine synthase (239 aa).

13–23 lines the ATP pocket; that stretch reads FSGGQDSTTCL. Zn(2+) is bound by residues C192, C201, C204, and C207.

This sequence belongs to the QueC family. Requires Zn(2+) as cofactor.

The enzyme catalyses 7-carboxy-7-deazaguanine + NH4(+) + ATP = 7-cyano-7-deazaguanine + ADP + phosphate + H2O + H(+). It functions in the pathway purine metabolism; 7-cyano-7-deazaguanine biosynthesis. Its function is as follows. Catalyzes the ATP-dependent conversion of 7-carboxy-7-deazaguanine (CDG) to 7-cyano-7-deazaguanine (preQ(0)). The sequence is that of 7-cyano-7-deazaguanine synthase from Shewanella sp. (strain MR-7).